A 491-amino-acid polypeptide reads, in one-letter code: Cobyric acid synthase (491 aa).

The GATase cobBQ-type domain maps to 250 to 439 (ELNIIVIRLP…LHGIFDNGSW (190 aa)). The Nucleophile role is filled by cysteine 331. Histidine 431 is an active-site residue.

It belongs to the CobB/CobQ family. CobQ subfamily.

It functions in the pathway cofactor biosynthesis; adenosylcobalamin biosynthesis. In terms of biological role, catalyzes amidations at positions B, D, E, and G on adenosylcobyrinic A,C-diamide. NH(2) groups are provided by glutamine, and one molecule of ATP is hydrogenolyzed for each amidation. In Microcystis aeruginosa (strain NIES-843 / IAM M-2473), this protein is Cobyric acid synthase.